Consider the following 250-residue polypeptide: Troponin I 1 (250 aa).

Disordered stretches follow at residues 1–59 (MSQI…ERKK) and 194–250 (SVFT…ADEE). Basic and acidic residues-rich tracts occupy residues 21–45 (DAQR…EAGQ) and 206–221 (DKPE…KEES). Positions 229 to 250 (PVEEEETAASEGEEEEEEADEE) are enriched in acidic residues.

This sequence belongs to the troponin I family. Strongly expressed in body wall muscle during embryogenesis, reduces during the larval stages to adult. In late-stage larvae and adults, expression is evident in the proximal gonad of both hermaphrodites and males.

Functionally, troponin I is the inhibitory subunit of troponin, the thin filament regulatory complex which confers calcium-sensitivity to muscle actomyosin ATPase activity. The protein is Troponin I 1 (tni-1) of Caenorhabditis elegans.